Consider the following 402-residue polypeptide: MLKVEMLSTGDEVLHGQIVDTNAAWLADFFFHQGLPLSRRNTVGDNLDDLVTILRERSQHADVLIVNGGLGPTSDDLSALAAATAKGEGLVLHEAWLKEMERYFHERGRVMTPSNRKQAELPASAEFINNPVGTACGFAVQLNRCLMFFTPGVPSEFKVMVEHEILPRLRERFSLPQPPVCLRLTTFGRSESDLAQSLDTLQLPPGVTMGYRSSMPIIELKLTGPASEKQAMEKLWLDVKRVAGQSVIFEGTEGLPSQISRELQNRQFSLTLSEQFTGGLLALQLSRAGAPLLACEVVPSQEETLAQTAHWITERRANHFAGLALAVSGFENEHLNFALATPDGTFALRVRFSTTRYSLAIRQEVCAMMALNMLRRWLNGQDIASEHGWIEVVESMTLSSAL.

The protein belongs to the CinA family.

This is CinA-like protein from Escherichia coli O17:K52:H18 (strain UMN026 / ExPEC).